A 154-amino-acid polypeptide reads, in one-letter code: Ribosomal RNA-processing protein 14-N (154 aa).

The interval 36–154 (WKQKKSTLEE…KHKASPRAGF (119 aa)) is disordered. The residue at position 80 (Ser80) is a Phosphoserine. Thr83 is modified (phosphothreonine). The span at 105 to 133 (QDLREKRKAGDLNQKRQNKRPVENEKDSQ) shows a compositional bias: basic and acidic residues. Over residues 140-154 (KVQKKKHKASPRAGF) the composition is skewed to basic residues.

This sequence belongs to the SURF6 family.

The protein resides in the nucleus. Its subcellular location is the nucleolus. Involved in ribosome biogenesis and cell polarity. Required for the synthesis of both 40S and 60S ribosomal subunits and may also play some direct role in correct positioning of the mitotic spindle during mitosis. The chain is Ribosomal RNA-processing protein 14-N (rrp14n) from Schizosaccharomyces pombe (strain 972 / ATCC 24843) (Fission yeast).